A 118-amino-acid chain; its full sequence is D-dopachrome decarboxylase-B (118 aa).

Proline 2 is modified (N-acetylproline).

It belongs to the MIF family. Homotrimer.

Its subcellular location is the cytoplasm. It catalyses the reaction D-dopachrome + H(+) = 5,6-dihydroxyindole + CO2. Tautomerization of D-dopachrome with decarboxylation to give 5,6-dihydroxyindole (DHI). The polypeptide is D-dopachrome decarboxylase-B (ddt-b) (Xenopus laevis (African clawed frog)).